The following is a 142-amino-acid chain: Large ribosomal subunit protein uL11 (142 aa).

Belongs to the universal ribosomal protein uL11 family. As to quaternary structure, part of the ribosomal stalk of the 50S ribosomal subunit. Interacts with L10 and the large rRNA to form the base of the stalk. L10 forms an elongated spine to which L12 dimers bind in a sequential fashion forming a multimeric L10(L12)X complex. One or more lysine residues are methylated.

In terms of biological role, forms part of the ribosomal stalk which helps the ribosome interact with GTP-bound translation factors. The chain is Large ribosomal subunit protein uL11 from Xanthomonas campestris pv. campestris (strain 8004).